A 421-amino-acid polypeptide reads, in one-letter code: Cytochrome c biogenesis protein Ccs1 (421 aa).

Helical transmembrane passes span 12 to 32 (LRFA…GTVI), 71 to 91 (TWWF…CTIL), and 157 to 177 (IAPI…IFGA).

Belongs to the Ccs1/CcsB family. As to quaternary structure, may interact with CcsA.

Its subcellular location is the plastid. It is found in the chloroplast thylakoid membrane. Its function is as follows. Required during biogenesis of c-type cytochromes (cytochrome c6 and cytochrome f) at the step of heme attachment. The protein is Cytochrome c biogenesis protein Ccs1 of Trieres chinensis (Marine centric diatom).